The following is a 73-amino-acid chain: Beta-defensin 39 (73 aa).

The first 23 residues, methionine 1–glycine 23, serve as a signal peptide directing secretion. 3 disulfides stabilise this stretch: cysteine 29/cysteine 58, cysteine 36/cysteine 51, and cysteine 41/cysteine 59.

Belongs to the beta-defensin family.

Its subcellular location is the secreted. Its function is as follows. Has antibacterial activity. The sequence is that of Beta-defensin 39 (Defb39) from Rattus norvegicus (Rat).